We begin with the raw amino-acid sequence, 440 residues long: Chaperone SurA (440 aa).

An N-terminal signal peptide occupies residues 1 to 25 (MGTKLSSRSPFSLPFLTLLAGMAIA). PpiC domains are found at residues 182 to 283 (SDEY…KLVE) and 294 to 392 (IDQT…QVIE).

The protein localises to the periplasm. The catalysed reaction is [protein]-peptidylproline (omega=180) = [protein]-peptidylproline (omega=0). Its function is as follows. Chaperone involved in the correct folding and assembly of outer membrane proteins. Recognizes specific patterns of aromatic residues and the orientation of their side chains, which are found more frequently in integral outer membrane proteins. May act in both early periplasmic and late outer membrane-associated steps of protein maturation. This chain is Chaperone SurA, found in Nitrosospira multiformis (strain ATCC 25196 / NCIMB 11849 / C 71).